A 599-amino-acid polypeptide reads, in one-letter code: Laccase-2 (599 aa).

The signal sequence occupies residues Met-1–Ala-19. 2 consecutive Plastocyanin-like domains span residues Val-21 to Tyr-145 and Val-157 to Glu-307. Residues His-82, His-84, His-127, and His-129 each coordinate Cu cation. A disulfide bond links Cys-103 and Cys-588. Residues Asn-207, Asn-208, Asn-231, Asn-397, and Asn-443 are each glycosylated (N-linked (GlcNAc...) asparagine). Positions Asp-450–Ala-567 constitute a Plastocyanin-like 3 domain. Cu cation is bound by residues His-497, His-500, His-502, His-549, Cys-550, His-551, and His-555.

It belongs to the multicopper oxidase family. Homodimer. Cu cation serves as cofactor. In mycelia, at a lower level than LCC4.

The protein resides in the secreted. The enzyme catalyses 4 hydroquinone + O2 = 4 benzosemiquinone + 2 H2O. Its function is as follows. Lignin degradation and detoxification of lignin-derived products. The chain is Laccase-2 (LCC2) from Thanatephorus cucumeris (Black scurf of potato).